The sequence spans 549 residues: Calcium-dependent protein kinase 5 (549 aa).

Residue Gly2 is the site of N-myristoyl glycine attachment. The disordered stretch occupies residues 43–69 (DEPAGKKAPRGSAAAADAPHAASMKRG). Over residues 52-64 (RGSAAAADAPHAA) the composition is skewed to low complexity. One can recognise a Protein kinase domain in the interval 92–350 (YALGRKLGQG…AHEVLCHPWI (259 aa)). ATP-binding positions include 98–106 (LGQGQFGTT) and Lys121. Asp216 (proton acceptor) is an active-site residue. The autoinhibitory domain stretch occupies residues 356–386 (APDRPLDPAVLSRIKQFSAMNKLKKMALRVI). 4 EF-hand domains span residues 393–428 (EEIAGLKEMFKAMDTDNSGAITYDELKEGMRKYGST), 429–464 (LKDTEIRDLMEAADVDNSGTIDYIEFIAATLHLNKL), 465–500 (EREEHLVAAFSYFDKDGSGYITVDELQQACKEHNMP), and 501–534 (DAFLDDVIKEADQDNDGRIDYGEFVAMMTKGNMG). Positions 406, 408, 410, 417, 442, 444, 446, 448, 453, 478, 480, 482, 484, 489, 512, 514, 516, 518, and 523 each coordinate Ca(2+).

It belongs to the protein kinase superfamily. Ser/Thr protein kinase family. CDPK subfamily.

The protein resides in the membrane. It catalyses the reaction L-seryl-[protein] + ATP = O-phospho-L-seryl-[protein] + ADP + H(+). The catalysed reaction is L-threonyl-[protein] + ATP = O-phospho-L-threonyl-[protein] + ADP + H(+). Its activity is regulated as follows. Activated by calcium. Autophosphorylation may play an important role in the regulation of the kinase activity. Its function is as follows. May play a role in signal transduction pathways that involve calcium as a second messenger. The chain is Calcium-dependent protein kinase 5 from Oryza sativa subsp. japonica (Rice).